A 4377-amino-acid polypeptide reads, in one-letter code: E3 ubiquitin-protein ligase HUWE1 (4377 aa).

2 positions are modified to phosphoserine: S648 and S649. 3 disordered regions span residues 706–758, 978–1001, and 1018–1038; these read KADG…VVGT, DEKAGTTQGGKRSDGEQDGTAGSM, and TLAPMETDEPSSSDSKGKSKI. Over residues 725–735 the composition is skewed to acidic residues; that stretch reads ASSEDEEEEEV. Polar residues predominate over residues 737–756; it reads AMQSFNSAQQNETEPNQQVV. S740 is subject to Phosphoserine. Phosphoserine is present on S1084. The span at 1291–1302 shows a compositional bias: basic and acidic residues; the sequence is LSKEKEGSRGEE. Positions 1291–1320 are disordered; it reads LSKEKEGSRGEEEAGQEEGGSRREPQVNQQ. The 40-residue stretch at 1316-1355 folds into the UBA domain; it reads QVNQQQLQQLMDMGFTREHAMEALLNTSTMEQATEYLLTH. 4 positions are modified to phosphoserine: S1368, S1370, S1382, and S1395. In terms of domain architecture, UIM spans 1370–1389; the sequence is SEEDQMMRAIAMSLGQDIPM. The disordered stretch occupies residues 1396–1415; the sequence is PEEVACRKEEEERKAREKQE. A WWE domain is found at 1603–1680; it reads RAQMTKYLQS…ETGNRRPVML (78 aa). The disordered stretch occupies residues 1690-1733; it reads KNSKSSNGQELEKTLEESKETDIKHKENKGNDIPLALESTNTEK. Over residues 1699 to 1719 the composition is skewed to basic and acidic residues; that stretch reads ELEKTLEESKETDIKHKENKG. The residue at position 1907 (S1907) is a Phosphoserine. Disordered regions lie at residues 2019–2065, 2262–2343, and 2355–2479; these read APAE…SKPL, SLFG…QEMQ, and LLER…ASPL. The segment covering 2022–2033 has biased composition (polar residues); the sequence is ETSTTGTSQGEA. T2035 carries the post-translational modification Phosphothreonine. Residues 2037–2057 are compositionally biased toward basic and acidic residues; that stretch reads EETREGKKDKEGDRTSEEGKQ. Low complexity-rich tracts occupy residues 2262-2271 and 2278-2291; these read SLFGSKSASS and DAQGASQDSSSHQQ. A Phosphoserine modification is found at S2266. N6-acetyllysine is present on K2267. Acidic residues-rich tracts occupy residues 2295-2306 and 2314-2325; these read EPGEAEVQEEDH and ADGDIMDGEAET. A phosphoserine mark is found at S2362, S2365, and S2391. Residues 2388–2398 are compositionally biased toward polar residues; that stretch reads SNLSQASTLQA. The segment covering 2408 to 2472 has biased composition (acidic residues); it reads DPEDEEEHTQ…SEMELDEDYP (65 aa). S2527, S2532, and S2535 each carry phosphoserine. At T2554 the chain carries Phosphothreonine. Residues S2584, S2595, and S2619 each carry the phosphoserine modification. Over residues 2704 to 2716 the composition is skewed to basic and acidic residues; the sequence is IIDKGKEDKENRD. Disordered regions lie at residues 2704-2970, 2991-3012, and 3036-3059; these read IIDK…GVDP, IRPPTRSAPSSNSSAPAVVGNP, and QQRAEQQRRELAQNASSDTPMDPV. A compositionally biased stretch (polar residues) spans 2717-2736; it reads QSAQCTVTKTNDSTEQNVSD. Residues 2738 to 2756 show a composition bias toward low complexity; the sequence is TPMPDSYPTTPSSTDAPTS. T2751 bears the Phosphothreonine mark. 3 stretches are compositionally biased toward polar residues: residues 2818-2835, 2847-2864, and 2877-2890; these read AETTQMELSPAPTITSLS, AVSSQLEGSPMDTSSLAS, and AGSSEQPTAGSSTP. A phosphoserine mark is found at S2826, S2833, S2835, S2861, S2887, and S2888. At T2889 the chain carries Phosphothreonine. 2 stretches are compositionally biased toward low complexity: residues 2913–2932 and 2993–3007; these read PPEDSSPPASSESSSTRDSA and PPTRSAPSSNSSAPA. Position 2918 is a phosphoserine (S2918). Residues S3116, S3117, S3122, S3127, and S3135 each carry the phosphoserine modification. Omega-N-methylarginine is present on R3149. Disordered regions lie at residues 3243–3266, 3352–3383, 3405–3429, 3471–3514, and 3539–3566; these read PKLSTSEERGKKSSKSCASSSHEN, TQQRTKETNCESDRERGSKQACSPCSSQSSSS, GKNSVKSVPVSSGGEGETSPHSLEA, SEVQ…TTPV, and TPTTATTTVSTSTTKGSKSPAKVGEGGS. Residues 3355–3369 show a composition bias toward basic and acidic residues; it reads RTKETNCESDRERGS. Low complexity predominate over residues 3370–3383; sequence KQACSPCSSQSSSS. Low complexity-rich tracts occupy residues 3475–3503 and 3539–3552; these read TNSSNSGSSTAATSNTSTTTTTTTTATAP and TPTTATTTVSTSTT. Phosphoserine occurs at positions 3557, 3663, 3753, 3758, 3760, and 3761. A disordered region spans residues 3738 to 3759; it reads TRRANKKAKQTGRLGSSGLGSA. Residues 3749–3759 are compositionally biased toward low complexity; the sequence is GRLGSSGLGSA. 2 disordered regions span residues 3782-3850 and 3897-3951; these read EGQR…LPLL and RESK…SSSL. Positions 3794–3803 are enriched in polar residues; that stretch reads TSESSNQSET. Phosphoserine is present on residues S3810, S3818, and S3830. Positions 3817–3828 are enriched in polar residues; sequence PSPSAQDTQSIV. T3833 is modified (phosphothreonine). Composition is skewed to basic and acidic residues over residues 3836 to 3845 and 3897 to 3918; these read GEKEKEEKPP and RESKPPVRDTRESQLAHIKDEP. Residues S3909 and S3922 each carry the phosphoserine modification. The span at 3919–3928 shows a compositional bias: pro residues; it reads PPLSPAPLTP. Residues T3927 and T3930 each carry the phosphothreonine modification. Over residues 3941–3951 the composition is skewed to polar residues; that stretch reads EPSSMHISSSL. The HECT domain maps to 4041–4377; it reads SPEEMKNRLY…QECSEGFGLA (337 aa). Y4274 bears the Phosphotyrosine mark. Residue C4344 is the Glycyl thioester intermediate of the active site.

Belongs to the UPL family. TOM1/PTR1 subfamily. In terms of assembly, interacts with isoform p19ARF of CDKN2A which strongly inhibits HUWE1 ubiquitin ligase activity. Interacts with MYCN, POLB and CDC6. Interacts with PA2G4. Interacts with NR1D1. Interacts with AMBRA1. Interacts with HAPSTR1. Interacts with HAPSTR2. In hepatocytes, interacts with PAQR3; the interaction promotes PPARA poylubiquitination and STUB1-mediated degradation. In terms of processing, phosphorylated on tyrosine; phosphorylation is probably required for its ability to inhibit TP53 transactivation. In terms of tissue distribution, widely expressed.

The protein localises to the cytoplasm. It is found in the nucleus. The protein resides in the mitochondrion. The enzyme catalyses S-ubiquitinyl-[E2 ubiquitin-conjugating enzyme]-L-cysteine + [acceptor protein]-L-lysine = [E2 ubiquitin-conjugating enzyme]-L-cysteine + N(6)-ubiquitinyl-[acceptor protein]-L-lysine.. The protein operates within protein modification; protein ubiquitination. E3 ubiquitin-protein ligase which mediates ubiquitination and subsequent proteasomal degradation of target proteins. Regulates apoptosis by catalyzing the polyubiquitination and degradation of MCL1. Mediates monoubiquitination of DNA polymerase beta (POLB) at 'Lys-41', 'Lys-61' and 'Lys-81', thereby playing a role in base-excision repair. Also ubiquitinates the p53/TP53 tumor suppressor and core histones including H1, H2A, H2B, H3 and H4. Ubiquitinates MFN2 to negatively regulate mitochondrial fusion in response to decreased stearoylation of TFRC. Ubiquitination of MFN2 also takes place following induction of mitophagy; AMBRA1 acts as a cofactor for HUWE1-mediated ubiquitination. Regulates neural differentiation and proliferation by catalyzing the polyubiquitination and degradation of MYCN. May regulate abundance of CDC6 after DNA damage by polyubiquitinating and targeting CDC6 to degradation. Mediates polyubiquitination of PA2G4. Acts in concert with MYCBP2 to regulate the circadian clock gene expression by promoting the lithium-induced ubiquination and degradation of NR1D1. Binds to an upstream initiator-like sequence in the preprodynorphin gene. Mediates HAPSTR1 degradation, but is also a required cofactor in the pathway by which HAPSTR1 governs stress signaling. Acts as a regulator of the JNK and NF-kappa-B signaling pathways by mediating assembly of heterotypic 'Lys-63'-/'Lys-48'-linked branched ubiquitin chains that are then recognized by TAB2: HUWE1 mediates branching of 'Lys-48'-linked chains of substrates initially modified with 'Lys-63'-linked conjugates by TRAF6. 'Lys-63'-/'Lys-48'-linked branched ubiquitin chains protect 'Lys-63'-linkages from CYLD deubiquitination. Ubiquitinates PPARA in hepatocytes. The chain is E3 ubiquitin-protein ligase HUWE1 (Huwe1) from Mus musculus (Mouse).